The following is a 3966-amino-acid chain: Histone-lysine N-methyltransferase 2A (3966 aa).

Disordered regions lie at residues methionine 1–valine 106 and valine 130–isoleucine 231. The Menin-binding motif (MBM) motif lies at arginine 6–arginine 25. Positions threonine 15–glycine 29 are enriched in gly residues. A compositionally biased stretch (low complexity) spans glycine 75–alanine 102. The short motif at glycine 121–glycine 132 is the Integrase domain-binding motif 1 (IBM1) element. Phosphoserine; by CK2 is present on residues serine 134 and serine 140. The short motif at glutamine 145–glycine 150 is the Integrase domain-binding motif 2 (IBM2) element. At serine 151 the chain carries Phosphoserine. The segment at residues lysine 167 to arginine 178 is a DNA-binding region (a.T hook 1). Serine 195 bears the Phosphoserine mark. The span at serine 200 to lysine 218 shows a compositional bias: basic and acidic residues. The segment at residues serine 215–threonine 225 is a DNA-binding region (a.T hook 2). N6-acetyllysine is present on lysine 237. The segment at residues arginine 299–threonine 307 is a DNA-binding region (a.T hook 3). Residues leucine 322–lysine 343 form a disordered region. Lysine 371 bears the N6-acetyllysine mark. A disordered region spans residues arginine 440 to leucine 590. The segment covering serine 450–glutamine 489 has biased composition (low complexity). Serine 516 is modified (phosphoserine). Over residues leucine 544–serine 557 the composition is skewed to low complexity. Over residues serine 558–glutamine 571 the composition is skewed to pro residues. Lysine 634 carries the post-translational modification N6-acetyllysine. Serine 678 is modified (phosphoserine). Disordered stretches follow at residues glutamate 711–alanine 943, arginine 963–isoleucine 1003, isoleucine 1034–arginine 1064, and isoleucine 1101–proline 1161. Composition is skewed to low complexity over residues serine 717–serine 730 and leucine 760–leucine 790. Polar residues-rich tracts occupy residues asparagine 791–glutamate 806 and glutamine 817–proline 830. Threonine 837 carries the phosphothreonine modification. Residues glutamate 843–lysine 887 show a composition bias toward basic and acidic residues. A Phosphoserine modification is found at serine 923. Over residues serine 989–isoleucine 1003 the composition is skewed to low complexity. Residues leucine 1040–serine 1059 show a composition bias toward polar residues. Residue serine 1053 is modified to Phosphoserine. Residues isoleucine 1101 to serine 1111 show a composition bias toward basic and acidic residues. At lysine 1127 the chain carries N6-acetyllysine. Residues lysine 1144–glutamine 1192 form a CXXC-type zinc finger. Cysteine 1152, cysteine 1155, cysteine 1158, cysteine 1164, cysteine 1167, cysteine 1170, cysteine 1186, and cysteine 1191 together coordinate Zn(2+). Residues tryptophan 1196–glutamine 1390 are disordered. Residues serine 1217 to threonine 1229 show a composition bias toward basic and acidic residues. Over residues alanine 1230–alanine 1241 the composition is skewed to low complexity. Residue lysine 1232 is modified to N6-acetyllysine. Basic and acidic residues predominate over residues proline 1245–glutamate 1270. Polar residues predominate over residues lysine 1369–glutamine 1390. 3 consecutive PHD-type zinc fingers follow at residues arginine 1430 to cysteine 1481, cysteine 1478 to cysteine 1532, and glycine 1565 to arginine 1629. The segment at lysine 1583–glutamate 1599 is interaction with histone H3K4me3. The 131-residue stretch at alanine 1637–valine 1767 folds into the Bromo domain. 2 disordered regions span residues tyrosine 1665–lysine 1714 and tryptophan 1807–aspartate 1870. A compositionally biased stretch (pro residues) spans alanine 1828–proline 1849. Serine 1839 carries the post-translational modification Phosphoserine. Threonine 1847 carries the phosphothreonine modification. Residue serine 1860 is modified to Phosphoserine. A C2HC pre-PHD-type zinc finger spans residues asparagine 1872 to valine 1912. The PHD-type 4 zinc finger occupies leucine 1933 to arginine 1980. In terms of domain architecture, FYR N-terminal spans asparagine 2020–cysteine 2076. Serine 2100 carries the phosphoserine modification. Residues arginine 2147–histidine 2174 are disordered. Threonine 2148 carries the post-translational modification Phosphothreonine. Phosphoserine occurs at positions 2152 and 2202. 4 disordered regions span residues valine 2214 to glycine 2339, arginine 2371 to alanine 2619, glutamate 2639 to aspartate 2673, and lysine 2709 to glutamate 2759. Positions serine 2218–serine 2230 are enriched in low complexity. Composition is skewed to polar residues over residues leucine 2250–serine 2284 and threonine 2308–serine 2320. Composition is skewed to basic and acidic residues over residues isoleucine 2411 to aspartate 2422 and serine 2430 to serine 2440. Polar residues predominate over residues glycine 2498–glutamate 2509. Lysine 2524 participates in a covalent cross-link: Glycyl lysine isopeptide (Lys-Gly) (interchain with G-Cter in SUMO2). Positions glutamate 2528 to glutamate 2537 are enriched in polar residues. Residue serine 2560 is modified to Phosphoserine. The segment covering proline 2569–proline 2588 has biased composition (polar residues). Residue serine 2607 is modified to Phosphoserine. Residues lysine 2609–arginine 2618 are compositionally biased toward basic residues. Residues glycine 2663–aspartate 2673 show a composition bias toward acidic residues. Over residues serine 2722–proline 2737 the composition is skewed to polar residues. Residues asparagine 2740 to glutamate 2759 are compositionally biased toward basic and acidic residues. Serine 2792 is subject to Phosphoserine. The 9aaTAD signature appears at serine 2843–lysine 2851. At serine 2951 the chain carries Phosphoserine. Lysine 2954 carries the N6-acetyllysine modification. Disordered regions lie at residues isoleucine 2958–valine 3060 and alanine 3164–isoleucine 3239. A compositionally biased stretch (polar residues) spans histidine 3012–proline 3025. Serine 3032 is modified (phosphoserine). The segment covering valine 3035 to valine 3060 has biased composition (polar residues). The segment covering serine 3167 to serine 3178 has biased composition (low complexity). A compositionally biased stretch (polar residues) spans glutamate 3196–serine 3212. Residues leucine 3214–lysine 3229 show a composition bias toward basic residues. The residue at position 3369 (threonine 3369) is a Phosphothreonine. Lysine 3459 is modified (N6-acetyllysine). The segment at threonine 3462–serine 3640 is disordered. A compositionally biased stretch (polar residues) spans proline 3475–glutamate 3487. Low complexity predominate over residues proline 3501–glycine 3528. 2 positions are modified to phosphoserine: serine 3510 and serine 3523. A compositionally biased stretch (basic and acidic residues) spans threonine 3558–aspartate 3570. The FYR C-terminal domain maps to lysine 3663–phenylalanine 3744. The short motif at glycine 3759–glutamate 3764 is the WDR5 interaction motif (WIN) element. The segment at histidine 3782 to arginine 3805 is disordered. The 117-residue stretch at glutamate 3826–lysine 3942 folds into the SET domain. Histidine 3836 and arginine 3838 together coordinate S-adenosyl-L-methionine. The residue at position 3879 (cysteine 3879) is an S-methylcysteine; by autocatalysis. S-adenosyl-L-methionine contacts are provided by residues tyrosine 3880 and asparagine 3903–histidine 3904. Zn(2+)-binding residues include cysteine 3906 and cysteine 3954. The Post-SET domain occupies asparagine 3950–asparagine 3966. Asparagine 3955 is an S-adenosyl-L-methionine binding site. Residues cysteine 3956 and cysteine 3961 each contribute to the Zn(2+) site.

It belongs to the class V-like SAM-binding methyltransferase superfamily. Histone-lysine methyltransferase family. TRX/MLL subfamily. In terms of assembly, MLL cleavage product N320 heterodimerizes with MLL cleavage product C180 (via SET and FYRC domains). Component of some MLL1/MLL complex, at least composed of the core components KMT2A/MLL1, ASH2L, HCFC1/HCF1, HCFC2, WDR5, DPY30 and RBBP5, as well as the facultative components BACC1, CHD8, E2F6, HSP70, INO80C, KANSL1, LAS1L, MAX, MCRS1, MEN1, MGA, KAT8/MOF, PELP1, PHF20, PRP31, RING2, RUVB1/TIP49A, RUVB2/TIP49B, SENP3, TAF1, TAF4, TAF6, TAF7, TAF9 and TEX10. Interacts (via WIN motif) with WDR5; the interaction is direct. Interaction with WDR5 is required for stable interaction with ASH2L and RBBP5, and thereby also for optimal histone methyltransferase activity. Interacts with KAT8/MOF; the interaction is direct. Interacts with SBF1 and PPP1R15A. Interacts with ZNF335. Interacts with CLOCK and BMAL1 in a circadian manner. Interacts with PPIE; this results in decreased histone H3 methyltransferase activity. Interacts with CREBBP. Interacts with the WRAD complex composed of WDR5, RBBP5, ASH2L and DPY30. Interacts (via MBM motif) with MEN1. Interacts (via IBM motifs) with PSIP1 (via IBD domain) with moderate affinity whereas the KMT2A-MEN1 complex interacts with a greater affinity; MEN1 enhances interaction of KMT2A with PSIP1. Phosphorylation increases its affinity for PSIP1. Forms a complex with CREBBP and CREB1. Post-translationally, proteolytic cleavage by TASP1 generates MLL cleavage 3product N320 and MLL cleavage product C180, which reassemble through a non-covalent association. 2 cleavage sites exist, cleavage site 1 (CS1) and cleavage site 2 (CS2), to generate MLL cleavage products N320 and C180. CS2 is the major site. In terms of processing, phosphorylation increases its interaction with PSIP1. Auto-methylated at Cys-3879: auto-methylation is inhibited by the WRAD complex and unmodified histone H3.

It is found in the nucleus. The enzyme catalyses L-lysyl(4)-[histone H3] + S-adenosyl-L-methionine = N(6)-methyl-L-lysyl(4)-[histone H3] + S-adenosyl-L-homocysteine + H(+). It carries out the reaction N(6)-methyl-L-lysyl(4)-[histone H3] + S-adenosyl-L-methionine = N(6),N(6)-dimethyl-L-lysyl(4)-[histone H3] + S-adenosyl-L-homocysteine + H(+). It catalyses the reaction L-cysteinyl-[protein] + S-adenosyl-L-methionine = S-methyl-L-cysteinyl-[protein] + S-adenosyl-L-homocysteine + H(+). Its function is as follows. Histone methyltransferase that plays an essential role in early development and hematopoiesis. Catalytic subunit of the MLL1/MLL complex, a multiprotein complex that mediates both methylation of 'Lys-4' of histone H3 (H3K4me) complex and acetylation of 'Lys-16' of histone H4 (H4K16ac). Catalyzes methyl group transfer from S-adenosyl-L-methionine to the epsilon-amino group of 'Lys-4' of histone H3 (H3K4) via a non-processive mechanism. Part of chromatin remodeling machinery predominantly forms H3K4me1 and H3K4me2 methylation marks at active chromatin sites where transcription and DNA repair take place. Has weak methyltransferase activity by itself, and requires other component of the MLL1/MLL complex to obtain full methyltransferase activity. Has no activity toward histone H3 phosphorylated on 'Thr-3', less activity toward H3 dimethylated on 'Arg-8' or 'Lys-9', while it has higher activity toward H3 acetylated on 'Lys-9'. Binds to unmethylated CpG elements in the promoter of target genes and helps maintain them in the nonmethylated state. Required for transcriptional activation of HOXA9. Promotes PPP1R15A-induced apoptosis. Plays a critical role in the control of circadian gene expression and is essential for the transcriptional activation mediated by the CLOCK-BMAL1 heterodimer. Establishes a permissive chromatin state for circadian transcription by mediating a rhythmic methylation of 'Lys-4' of histone H3 (H3K4me) and this histone modification directs the circadian acetylation at H3K9 and H3K14 allowing the recruitment of CLOCK-BMAL1 to chromatin. Also has auto-methylation activity on Cys-3879 in absence of histone H3 substrate. This chain is Histone-lysine N-methyltransferase 2A (Kmt2a), found in Mus musculus (Mouse).